We begin with the raw amino-acid sequence, 525 residues long: Keratin, type II cytoskeletal 4 (525 aa).

The head stretch occupies residues 1–145 (MIARQSSVRG…DPEIQKIRTA (145 aa)). R13 bears the Omega-N-methylarginine mark. A coil 1A region spans residues 146–181 (EREQIKTLNNKFASFIDKVRFLEQQNKVLETKWNLL). An IF rod domain is found at 146-459 (EREQIKTLNN…KLLEGEECRM (314 aa)). The interval 182–200 (QQQTTTTSPKSLDPFFETY) is linker 1. The tract at residues 201-292 (INALRKNLDT…VLYEAELAQM (92 aa)) is coil 1B. Residues 293 to 316 (QTHVSDTSVVLSMDNNRNLDLDGI) are linker 12. The tract at residues 317–455 (IAEVRAQYED…ATYRKLLEGE (139 aa)) is coil 2. A tail region spans residues 456 to 524 (ECRMSGECKS…SSATITKRSP (69 aa)).

It belongs to the intermediate filament family. Heterotetramer of two type I and two type II keratins. Keratin-4 is generally associated with keratin-13. In terms of tissue distribution, expressed in the dorsal and ventral epithelium of the tongue. Highest expression levels are detected in the suprabasal layer with low levels detected in the basal cell layer. Within the suprabasal layer expression is highest in the spinous cells, decreases in the granular cells and is not detected in the stratum corneum.

The chain is Keratin, type II cytoskeletal 4 (Krt4) from Mus musculus (Mouse).